A 439-amino-acid chain; its full sequence is Argininosuccinate lyase (439 aa).

It belongs to the lyase 1 family. Argininosuccinate lyase subfamily.

It localises to the cytoplasm. It catalyses the reaction 2-(N(omega)-L-arginino)succinate = fumarate + L-arginine. It functions in the pathway amino-acid biosynthesis; L-arginine biosynthesis; L-arginine from L-ornithine and carbamoyl phosphate: step 3/3. This is Argininosuccinate lyase from Caldanaerobacter subterraneus subsp. tengcongensis (strain DSM 15242 / JCM 11007 / NBRC 100824 / MB4) (Thermoanaerobacter tengcongensis).